Reading from the N-terminus, the 152-residue chain is Deoxyuridine 5'-triphosphate nucleotidohydrolase (152 aa).

Substrate-binding positions include 71–73, Asn84, 88–90, and Met98; these read RSG and LID.

This sequence belongs to the dUTPase family. It depends on Mg(2+) as a cofactor.

It carries out the reaction dUTP + H2O = dUMP + diphosphate + H(+). Its pathway is pyrimidine metabolism; dUMP biosynthesis; dUMP from dCTP (dUTP route): step 2/2. Functionally, this enzyme is involved in nucleotide metabolism: it produces dUMP, the immediate precursor of thymidine nucleotides and it decreases the intracellular concentration of dUTP so that uracil cannot be incorporated into DNA. The polypeptide is Deoxyuridine 5'-triphosphate nucleotidohydrolase (Hahella chejuensis (strain KCTC 2396)).